The primary structure comprises 2717 residues: Naringenin synthase (2717 aa).

The interval 13 to 422 is adenylation (A) domain; that stretch reads HHAVESRDKV…VGRKKELIIR (410 aa). In terms of domain architecture, Carrier 1 spans 531 to 617; it reads AAVEALVLAE…AVRDYLFNRL (87 aa). Ser576 carries the O-(pantetheine 4'-phosphoryl)serine modification. The 429-residue stretch at 638–1066 folds into the Ketosynthase family 3 (KS3) domain; that stretch reads AEPIAIISMA…GTNAHIILEQ (429 aa). Catalysis depends on for beta-ketoacyl synthase activity residues Cys810, His945, and His988. The region spanning 1204–1462 is the Malonyl-CoA:ACP transacylase (MAT) domain; the sequence is PIFSRAFKEA…GPSAVLSPHV (259 aa). The tract at residues 1549–1688 is N-terminal hotdog fold; that stretch reads HGVLYRTTSI…GTLKLISLPP (140 aa). The PKS/mFAS DH domain occupies 1549–1847; sequence HGVLYRTTSI…LRAVQPPVVE (299 aa). The tract at residues 1561–1842 is dehydratase (DH) domain; that stretch reads TNDIICAGFV…ISEVMLRAVQ (282 aa). The active-site Proton acceptor; for dehydratase activity is the His1581. A C-terminal hotdog fold region spans residues 1703–1847; that stretch reads NSEVDVSKAY…LRAVQPPVVE (145 aa). Catalysis depends on Asp1764, which acts as the Proton donor; for dehydratase activity. The Ketoreductase (KR) domain occupies 2008 to 2186; the sequence is GTVLITGGTG…AVSLAWGPWA (179 aa). The Carrier 2 domain maps to 2277–2354; sequence SRSDTLLGLV…ALVQYLLDRI (78 aa). Residue Ser2313 is modified to O-(pantetheine 4'-phosphoryl)serine. A compositionally biased stretch (acidic residues) spans 2361–2373; it reads EIELDQDVAEEET. Residues 2361 to 2412 are disordered; the sequence is EIELDQDVAEEETVSGTNGHQNGHQNGTQNGHSNGHANGASTNGDATDGIDP. The span at 2375–2396 shows a compositional bias: low complexity; it reads SGTNGHQNGHQNGTQNGHSNGH. Residues 2497–2711 form a thioester reductase (TE) domain region; sequence SLSVYSAVAA…AIAVEIEHWA (215 aa).

The protein in the N-terminal section; belongs to the NRP synthetase family. The cofactor is pantetheine 4'-phosphate.

Its function is as follows. PKS-NRPS hybrid synthetase that, alone, is sufficient to produce naringenin chalcone, the direct precursor of naringenin, by using p-coumaric acid (p-CA) or p-hydroxybenzoic acid (p-HBA) with the involvement of malonyl-CoA molecules. The adenylation (A) domain activates p-CA or p-HBA as adenylates, which are transferred to the thiol group of the pantetheinyl residue of the T domain, and further transferred to the adjacent PKS portion of fnsA. Besides p-CA and p-HBA, the A domain is also able to activate other substrates such as cinnamic acid and salicyclic acid. Within the PKS portion of fnsA, p-CA and p-HBA act as starter units for respectively three or four malonyl-CoA molecules for elongation by the AT and KS domains of fnsA. Afterwards, naringenin chalcone is cyclized through Claisen condensation and thereby released either spontaneously or catalyzed by the TE domain. Finally, naringenin chalcone is converted to naringenin spontaneously or by a chalcone isomerase. The polypeptide is Naringenin synthase (Pestalotiopsis fici (strain W106-1 / CGMCC3.15140)).